Here is a 469-residue protein sequence, read N- to C-terminus: Fe(3+)-Zn(2+) purple acid phosphatase 12 (469 aa).

The signal sequence occupies residues 1–28 (MSSRSDLKIKRVSLIIFLLSVLVEFCYG). N-linked (GlcNAc...) asparagine glycosylation is present at asparagine 114. Aspartate 168 lines the Fe cation pocket. N-linked (GlcNAc...) asparagine glycosylation is present at asparagine 176. Residues aspartate 197 and tyrosine 200 each coordinate Fe cation. Aspartate 197 contributes to the Zn(2+) binding site. Asparagine 234 contacts Zn(2+). Asparagine 234 is a binding site for substrate. Residue asparagine 307 is glycosylated (N-linked (GlcNAc...) asparagine). Histidine 319 is a binding site for Zn(2+). Residue histidine 329 is the Proton donor of the active site. Histidine 356 provides a ligand contact to Zn(2+). 356–358 (HVH) provides a ligand contact to substrate. A Fe cation-binding site is contributed by histidine 358. Asparagine 429 carries an N-linked (GlcNAc...) asparagine glycan.

Belongs to the metallophosphoesterase superfamily. Purple acid phosphatase family. As to quaternary structure, homodimer; disulfide-linked. It depends on Fe cation as a cofactor. Requires Zn(2+) as cofactor. As to expression, expressed in roots, stems, leaves, flowers and siliques.

The protein resides in the secreted. The catalysed reaction is a phosphate monoester + H2O = an alcohol + phosphate. The protein is Fe(3+)-Zn(2+) purple acid phosphatase 12 (PAP12) of Arabidopsis thaliana (Mouse-ear cress).